A 104-amino-acid chain; its full sequence is Large ribosomal subunit protein uL24 (104 aa).

This sequence belongs to the universal ribosomal protein uL24 family. Part of the 50S ribosomal subunit.

Its function is as follows. One of two assembly initiator proteins, it binds directly to the 5'-end of the 23S rRNA, where it nucleates assembly of the 50S subunit. One of the proteins that surrounds the polypeptide exit tunnel on the outside of the subunit. The chain is Large ribosomal subunit protein uL24 from Clostridium perfringens (strain ATCC 13124 / DSM 756 / JCM 1290 / NCIMB 6125 / NCTC 8237 / Type A).